A 291-amino-acid chain; its full sequence is tRNA (guanine-N(1)-)-methyltransferase (291 aa).

S-adenosyl-L-methionine is bound by residues Gly-160 and 184 to 189 (IGDYVL).

This sequence belongs to the RNA methyltransferase TrmD family. In terms of assembly, homodimer.

It localises to the cytoplasm. The enzyme catalyses guanosine(37) in tRNA + S-adenosyl-L-methionine = N(1)-methylguanosine(37) in tRNA + S-adenosyl-L-homocysteine + H(+). Functionally, specifically methylates guanosine-37 in various tRNAs. In Corynebacterium efficiens (strain DSM 44549 / YS-314 / AJ 12310 / JCM 11189 / NBRC 100395), this protein is tRNA (guanine-N(1)-)-methyltransferase.